The following is a 450-amino-acid chain: MDLKNKTVMVVGTGISGIGAVDLLNKVGADCILYDGNEKLDRQKVQEKLGDNKAEIIIGAFDEALLSKIDLLVISPGVPIDSPIVLTFKNAGIPVWGEIELAYNYDKGKIIAITGTNGKTTTTALVGQIIAAYNEKTFVVGNIGNSYTGEVLKTSEDSYTVAEISSFQLETVHEFHPIVSAILNITPDHLNRHHTMECYAWTKERISENQTKADTCVLNLEDKYLTDFAPECKANVVWFSSERKPSVGAYVDGEMIKYTDGTNDYDMLNVHDMNLLGKHNYENVCAAIAMTKAAGIPDDIIIEQVKKFKAVEHRIEYVATKNGVDYYNDSKGTNPEAAVKAIEAMVKPTILIGGGYDKGSEFDLYVKAFKDKVKLLVLIGQTSAKIADTCKKYGFENIEYADSMEQVVDICAKNAVSGDAVLLSPACASWGMFDNYEQRGRIFKDLVNNL.

115–121 (GTNGKTT) is a binding site for ATP.

The protein belongs to the MurCDEF family.

The protein localises to the cytoplasm. The catalysed reaction is UDP-N-acetyl-alpha-D-muramoyl-L-alanine + D-glutamate + ATP = UDP-N-acetyl-alpha-D-muramoyl-L-alanyl-D-glutamate + ADP + phosphate + H(+). The protein operates within cell wall biogenesis; peptidoglycan biosynthesis. Cell wall formation. Catalyzes the addition of glutamate to the nucleotide precursor UDP-N-acetylmuramoyl-L-alanine (UMA). This Lachnospira eligens (strain ATCC 27750 / DSM 3376 / VPI C15-48 / C15-B4) (Eubacterium eligens) protein is UDP-N-acetylmuramoylalanine--D-glutamate ligase.